The sequence spans 1008 residues: DNA polymerase (1008 aa).

This sequence belongs to the DNA polymerase type-B family. Interacts with A20. Component of the Uracil-DNA glycosylase(UDG)-A20-polymerase complex; A20 and UDG form a heterodimeric processivity factor that associates with E9 to form the processive polymerase holoenzyme.

It carries out the reaction DNA(n) + a 2'-deoxyribonucleoside 5'-triphosphate = DNA(n+1) + diphosphate. Functionally, catalyzes DNA synthesis. Acquires processivity by associating with a heterodimeric processivity factor comprised of the viral A20 and D4 proteins, thereby forming the DNA polymerase holoenzyme. Displays 3'- to 5' exonuclease activity. Might participate in viral DNA recombination. Does not perform translesion synthesis across an abasic site. The chain is DNA polymerase (POL) from Capra hircus (Goat).